A 201-amino-acid chain; its full sequence is MANPRVEELPDEEVKKTVVDDHDDDSSSDSDGEEETNLPAGSTAVIHSRNEKKARKAIEKLHLIRVDGITRVTLRRPKNILFVINNPEVYKSPNSGTYIVFGEAKIEDLNASAQAAAAQQLASSAGHDHDHAGHSHGEAKASEGDAKKEEEDDDEEVDADGIEDKDIELVMTQAGVSRTKAIKALKENDNDIVNSIMALSV.

Basic and acidic residues predominate over residues 1–20 (MANPRVEELPDEEVKKTVVD). Disordered stretches follow at residues 1–51 (MANP…SRNE) and 118–165 (AQQL…IEDK). Over residues 21 to 36 (DHDDDSSSDSDGEEET) the composition is skewed to acidic residues. In terms of domain architecture, NAC-A/B spans 48–113 (SRNEKKARKA…AKIEDLNASA (66 aa)). The span at 126-149 (GHDHDHAGHSHGEAKASEGDAKKE) shows a compositional bias: basic and acidic residues. Residues 150 to 161 (EEDDDEEVDADG) are compositionally biased toward acidic residues. In terms of domain architecture, UBA spans 162 to 200 (IEDKDIELVMTQAGVSRTKAIKALKENDNDIVNSIMALS).

It belongs to the NAC-alpha family. As to quaternary structure, part of the nascent polypeptide-associated complex (NAC), consisting of EGD2 and EGD1. NAC associates with ribosomes via EGD1.

It is found in the cytoplasm. It localises to the nucleus. Component of the nascent polypeptide-associated complex (NAC), a dynamic component of the ribosomal exit tunnel, protecting the emerging polypeptides from interaction with other cytoplasmic proteins to ensure appropriate nascent protein targeting. The NAC complex also promotes mitochondrial protein import by enhancing productive ribosome interactions with the outer mitochondrial membrane and blocks the inappropriate interaction of ribosomes translating non-secretory nascent polypeptides with translocation sites in the membrane of the endoplasmic reticulum. EGD2 may also be involved in transcription regulation. This is Nascent polypeptide-associated complex subunit alpha (EGD2) from Pyricularia oryzae (strain 70-15 / ATCC MYA-4617 / FGSC 8958) (Rice blast fungus).